The primary structure comprises 275 residues: Epidermal growth factor-like protein 7 (275 aa).

Residues 1–21 (MWGSGELLVAWFLVLAADGTT) form the signal peptide. One can recognise an EMI domain in the interval 28-105 (SRRVCTVGIS…TSGLPGACGA (78 aa)). 8 disulfides stabilise this stretch: Cys-32-Cys-90, Cys-57-Cys-63, Cys-89-Cys-103, Cys-108-Cys-118, Cys-112-Cys-124, Cys-126-Cys-135, Cys-142-Cys-153, and Cys-149-Cys-162. An EGF-like 1 domain is found at 104-136 (GAAICQPPCGNGGSCIRPGHCRCPVGWQGDTCQ). The Cell attachment site motif lies at 131–133 (QGD). Positions 138 to 178 (DVDECSTGEASCPQRCVNTVGSYWCQGWEGQSPSADGTRCL) constitute an EGF-like 2; calcium-binding domain. The disordered stretch occupies residues 173-193 (DGTRCLSKEGPSPVAPNPTAG). Residues 196–220 (SMAREEVYRLQARVDVLEQKLQLVL) adopt a coiled-coil conformation.

As to quaternary structure, interacts with ITGAV/ITGB3 in an RGD-dependent manner, increasing endothelial cell's motility. As to expression, expressed specifically by endothelial cells of the highly vascularized organs heart, lung and kidney.

The protein localises to the secreted. The protein resides in the extracellular space. Its function is as follows. Regulates vascular tubulogenesis in vivo. Inhibits platelet-derived growth factor (PDGF)-BB-induced smooth muscle cell migration and promotes endothelial cell adhesion to the extracellular matrix and angiogenesis. This chain is Epidermal growth factor-like protein 7 (Egfl7), found in Mus musculus (Mouse).